Reading from the N-terminus, the 229-residue chain is Protein FMP52-2, mitochondrial (229 aa).

The transit peptide at 1 to 45 directs the protein to the mitochondrion; sequence MAAGAFILGSTGLCGYQMLRFAEKSSLFDKISTVGRKLPDFKSEK.

It belongs to the FMP52 family.

It localises to the mitochondrion outer membrane. This chain is Protein FMP52-2, mitochondrial (FMP522), found in Scheffersomyces stipitis (strain ATCC 58785 / CBS 6054 / NBRC 10063 / NRRL Y-11545) (Yeast).